Consider the following 327-residue polypeptide: Probable cell division protein WhiA (327 aa).

Positions 275–308 (SLEELGRLADPPMTKDAVAGRIRRLLSMADRKAK) form a DNA-binding region, H-T-H motif. The disordered stretch occupies residues 304–327 (DRKAKQDGIPDTESAVTPDLLEDA).

This sequence belongs to the WhiA family.

Functionally, involved in cell division and chromosome segregation. In Mycobacterium sp. (strain MCS), this protein is Probable cell division protein WhiA.